A 42-amino-acid chain; its full sequence is Beta-2-microglobulin (42 aa).

The Ig-like C1-type domain occupies 5–42 (PKIQVYSRHPAZBGKPBFLBCYVSGFHPXZIZIBLLKB).

As to quaternary structure, heterodimer of an alpha chain and a beta chain. Beta-2-microglobulin is the beta-chain of major histocompatibility complex class I molecules.

It localises to the secreted. Component of the class I major histocompatibility complex (MHC). Involved in the presentation of peptide antigens to the immune system. This chain is Beta-2-microglobulin (B2M), found in Canis lupus familiaris (Dog).